A 349-amino-acid chain; its full sequence is ATP phosphoribosyltransferase regulatory subunit (349 aa).

The interval alanine 325–arginine 349 is disordered. The span at alanine 339–arginine 349 shows a compositional bias: low complexity.

Belongs to the class-II aminoacyl-tRNA synthetase family. HisZ subfamily. In terms of assembly, heteromultimer composed of HisG and HisZ subunits.

The protein localises to the cytoplasm. Its pathway is amino-acid biosynthesis; L-histidine biosynthesis; L-histidine from 5-phospho-alpha-D-ribose 1-diphosphate: step 1/9. Required for the first step of histidine biosynthesis. May allow the feedback regulation of ATP phosphoribosyltransferase activity by histidine. In Anaeromyxobacter dehalogenans (strain 2CP-C), this protein is ATP phosphoribosyltransferase regulatory subunit.